We begin with the raw amino-acid sequence, 129 residues long: NADH-quinone oxidoreductase subunit 15 (129 aa).

This sequence belongs to the complex I Nqo15 family. In terms of assembly, NDH-1 is composed of 15 different subunits, Nqo1 to Nqo15. The complex has a L-shaped structure, with the hydrophobic arm (subunits Nqo7, Nqo8 and Nqo10 to Nqo14) embedded in the membrane and the hydrophilic peripheral arm (subunits Nqo1 to Nqo6, Nqo9 and Nqo15) protruding into the bacterial cytoplasm. The hydrophilic domain contains all the redox centers. Nqo15 is bound to the side of the complex near the N-terminus of Nqo3, where it interacts with subunits Nqo3, Nqo2, Nqo1, Nqo9 and Nqo4.

Its subcellular location is the cell membrane. The enzyme catalyses a quinone + NADH + 5 H(+)(in) = a quinol + NAD(+) + 4 H(+)(out). Functionally, NDH-1 shuttles electrons from NADH, via FMN and iron-sulfur (Fe-S) centers, to quinones in the respiratory chain. The immediate electron acceptor for the enzyme in this species is menaquinone. Couples the redox reaction to proton translocation (for every two electrons transferred, four hydrogen ions are translocated across the cytoplasmic membrane), and thus conserves the redox energy in a proton gradient required for the synthesis of ATP. The Nqo15 subunit has probably a role in complex stabilization, and may be also involved in the storage of iron for iron-sulfur cluster regeneration in the complex. This is NADH-quinone oxidoreductase subunit 15 (nqo15) from Thermus thermophilus (strain ATCC 27634 / DSM 579 / HB8).